The primary structure comprises 188 residues: Ribose 1,5-bisphosphate phosphokinase PhnN (188 aa).

9–16 (GPSGAGKD) is an ATP binding site.

It belongs to the ribose 1,5-bisphosphokinase family.

It carries out the reaction alpha-D-ribose 1,5-bisphosphate + ATP = 5-phospho-alpha-D-ribose 1-diphosphate + ADP. Its pathway is metabolic intermediate biosynthesis; 5-phospho-alpha-D-ribose 1-diphosphate biosynthesis; 5-phospho-alpha-D-ribose 1-diphosphate from D-ribose 5-phosphate (route II): step 3/3. Its function is as follows. Catalyzes the phosphorylation of ribose 1,5-bisphosphate to 5-phospho-D-ribosyl alpha-1-diphosphate (PRPP). The polypeptide is Ribose 1,5-bisphosphate phosphokinase PhnN (Pectobacterium parmentieri (strain WPP163) (Pectobacterium wasabiae (strain WPP163))).